The chain runs to 470 residues: Argininosuccinate lyase (470 aa).

The protein belongs to the lyase 1 family. Argininosuccinate lyase subfamily.

The protein localises to the cytoplasm. It carries out the reaction 2-(N(omega)-L-arginino)succinate = fumarate + L-arginine. It functions in the pathway amino-acid biosynthesis; L-arginine biosynthesis; L-arginine from L-ornithine and carbamoyl phosphate: step 3/3. The sequence is that of Argininosuccinate lyase from Prochlorococcus marinus (strain MIT 9303).